A 249-amino-acid polypeptide reads, in one-letter code: uncharacterized protein (249 aa).

Residues 3-23 (WYWIGLLIVVVLFLLSAVRIV) traverse the membrane as a helical segment.

Belongs to the band 7/mec-2 family.

Its subcellular location is the membrane. This is an uncharacterized protein from Archaeoglobus fulgidus (strain ATCC 49558 / DSM 4304 / JCM 9628 / NBRC 100126 / VC-16).